Consider the following 179-residue polypeptide: Large ribosomal subunit protein uL6 (179 aa).

It belongs to the universal ribosomal protein uL6 family. Part of the 50S ribosomal subunit.

Functionally, this protein binds to the 23S rRNA, and is important in its secondary structure. It is located near the subunit interface in the base of the L7/L12 stalk, and near the tRNA binding site of the peptidyltransferase center. This is Large ribosomal subunit protein uL6 from Leptospira interrogans serogroup Icterohaemorrhagiae serovar copenhageni (strain Fiocruz L1-130).